A 92-amino-acid polypeptide reads, in one-letter code: MPRSLKKGPFIDLHLLQKVEKAVKTNDKKPIRTWSRRSTIFPQMIGLTIAVHNGRQHIPIFVADEMVGHKLGEFAPTRTYRGHTADKKAKKY.

It belongs to the universal ribosomal protein uS19 family.

In terms of biological role, protein S19 forms a complex with S13 that binds strongly to the 16S ribosomal RNA. The polypeptide is Small ribosomal subunit protein uS19 (Baumannia cicadellinicola subsp. Homalodisca coagulata).